The following is a 193-amino-acid chain: dTTP/UTP pyrophosphatase (193 aa).

The Proton acceptor role is filled by D71.

This sequence belongs to the Maf family. YhdE subfamily. Requires a divalent metal cation as cofactor.

Its subcellular location is the cytoplasm. The catalysed reaction is dTTP + H2O = dTMP + diphosphate + H(+). It catalyses the reaction UTP + H2O = UMP + diphosphate + H(+). In terms of biological role, nucleoside triphosphate pyrophosphatase that hydrolyzes dTTP and UTP. May have a dual role in cell division arrest and in preventing the incorporation of modified nucleotides into cellular nucleic acids. The sequence is that of dTTP/UTP pyrophosphatase from Geobacter sp. (strain M21).